Consider the following 459-residue polypeptide: Ribulose bisphosphate carboxylase (459 aa).

Asparagine 111 contributes to the substrate binding site. Lysine 166 serves as the catalytic Proton acceptor. Substrate is bound at residue lysine 168. Residues lysine 191, aspartate 193, and glutamate 194 each coordinate Mg(2+). At lysine 191 the chain carries N6-carboxylysine. Residue histidine 287 is the Proton acceptor of the active site. Substrate is bound by residues arginine 288, histidine 321, and serine 368.

The protein belongs to the RuBisCO large chain family. Type II subfamily. Homodimer. The cofactor is Mg(2+).

The catalysed reaction is 2 (2R)-3-phosphoglycerate + 2 H(+) = D-ribulose 1,5-bisphosphate + CO2 + H2O. It carries out the reaction D-ribulose 1,5-bisphosphate + O2 = 2-phosphoglycolate + (2R)-3-phosphoglycerate + 2 H(+). Its function is as follows. RuBisCO catalyzes two reactions: the carboxylation of D-ribulose 1,5-bisphosphate, the primary event in carbon dioxide fixation, as well as the oxidative fragmentation of the pentose substrate. Both reactions occur simultaneously and in competition at the same active site. The sequence is that of Ribulose bisphosphate carboxylase from Paramagnetospirillum magnetotacticum (Aquaspirillum magnetotacticum).